The following is a 270-amino-acid chain: Myelin protein zero-like protein 1 (270 aa).

The signal sequence occupies residues 1 to 35; sequence MAEAVGAVALIAAPARRRWLWSVLAAMLGLLTARI. An Ig-like V-type domain is found at 36 to 151; that stretch reads SALEVHTPKE…DIVVRPGHIR (116 aa). Residues 36-162 lie on the Extracellular side of the membrane; it reads SALEVHTPKE…HVVEIDNLLV (127 aa). N-linked (GlcNAc...) asparagine glycosylation is found at N50 and N130. C58 and C135 are oxidised to a cystine. The chain crosses the membrane as a helical span at residues 163-183; the sequence is FLVWVVVGTVTAVVLGLTLLI. At 184–270 the chain is on the cytoplasmic side; it reads SLVLVVLYRR…SVVYADIRKD (87 aa). The disordered stretch occupies residues 201–257; that stretch reads TGCSTSERLSPVKQAPRKCPSDTEGLVKSPPSAGSHQGPVIYAQLDHSGGHHSGKIN. A phosphoserine mark is found at S204, S206, S210, and S221. An ITIM motif 1 motif is present at residues 240 to 245; sequence VIYAQL. Residue Y242 is modified to Phosphotyrosine. S261 carries the post-translational modification Phosphoserine. An ITIM motif 2 motif is present at residues 262–267; it reads VVYADI. A Phosphotyrosine modification is found at Y264.

This sequence belongs to the myelin P0 protein family. In terms of assembly, interacts with phosphorylated PTPN11/SHP-2. Post-translationally, phosphorylated on tyrosine residues upon stimulation with pervanadate and concanavalin-A (ConA). Phosphorylation at Tyr-242 and Tyr-264 is required for interaction with PTPN11/SHP-2. Dephosphorylated by PTPN11/SHP-2 (in vitro).

The protein resides in the membrane. Its function is as follows. Cell surface receptor, which is involved in signal transduction processes. Recruits PTPN11/SHP-2 to the cell membrane and is a putative substrate of PTPN11/SHP-2. Is a major receptor for concanavalin-A (ConA) and is involved in cellular signaling induced by ConA, which probably includes Src family tyrosine-protein kinases. Isoform 2 seems to have a dominant negative role; it blocks tyrosine phosphorylation of MPZL1 induced by ConA. Isoform 1, but not isoform 2, may be involved in regulation of integrin-mediated cell motility. The sequence is that of Myelin protein zero-like protein 1 (Mpzl1) from Mus musculus (Mouse).